Reading from the N-terminus, the 356-residue chain is tRNA-specific 2-thiouridylase MnmA (356 aa).

ATP is bound by residues 6 to 13 (AMSGGVDS) and L32. C101 acts as the Nucleophile in catalysis. C101 and C193 form a disulfide bridge. Position 125 (G125) interacts with ATP. The tract at residues 143–145 (KDQ) is interaction with tRNA. C193 acts as the Cysteine persulfide intermediate in catalysis.

Belongs to the MnmA/TRMU family.

The protein resides in the cytoplasm. It catalyses the reaction S-sulfanyl-L-cysteinyl-[protein] + uridine(34) in tRNA + AH2 + ATP = 2-thiouridine(34) in tRNA + L-cysteinyl-[protein] + A + AMP + diphosphate + H(+). Its function is as follows. Catalyzes the 2-thiolation of uridine at the wobble position (U34) of tRNA, leading to the formation of s(2)U34. This chain is tRNA-specific 2-thiouridylase MnmA, found in Mycolicibacterium smegmatis (strain ATCC 700084 / mc(2)155) (Mycobacterium smegmatis).